Here is a 365-residue protein sequence, read N- to C-terminus: Putative clathrin assembly protein At4g40080 (365 aa).

An ENTH domain is found at 29-167 (NTKSKTLSFH…STSRIMGFFI (139 aa)).

It localises to the membrane. The protein resides in the clathrin-coated pit. It is found in the golgi apparatus. Its subcellular location is the cytoplasmic vesicle. The protein localises to the clathrin-coated vesicle. This is Putative clathrin assembly protein At4g40080 from Arabidopsis thaliana (Mouse-ear cress).